The sequence spans 407 residues: Phosphopentomutase (407 aa).

Residues Asp10, Asp306, His311, Asp347, His348, and His359 each coordinate Mn(2+).

The protein belongs to the phosphopentomutase family. Mn(2+) is required as a cofactor.

The protein localises to the cytoplasm. The enzyme catalyses 2-deoxy-alpha-D-ribose 1-phosphate = 2-deoxy-D-ribose 5-phosphate. The catalysed reaction is alpha-D-ribose 1-phosphate = D-ribose 5-phosphate. The protein operates within carbohydrate degradation; 2-deoxy-D-ribose 1-phosphate degradation; D-glyceraldehyde 3-phosphate and acetaldehyde from 2-deoxy-alpha-D-ribose 1-phosphate: step 1/2. Isomerase that catalyzes the conversion of deoxy-ribose 1-phosphate (dRib-1-P) and ribose 1-phosphate (Rib-1-P) to deoxy-ribose 5-phosphate (dRib-5-P) and ribose 5-phosphate (Rib-5-P), respectively. This Shigella boydii serotype 18 (strain CDC 3083-94 / BS512) protein is Phosphopentomutase.